We begin with the raw amino-acid sequence, 555 residues long: Zinc transporter ZIP5 (555 aa).

The Extracellular portion of the chain corresponds to 1 to 242 (MGGQTVWMTL…HSQASKTSEG (242 aa)). A disordered region spans residues 108 to 148 (KHPSQSISHSHSHEDHHPSQGTTNSPPLRESLDAKSALSGS). Residues 243–263 (FLIALGWASLALLVISLPSLV) form a helical membrane-spanning segment. Over 264–314 (ALGMAPLLQPSVLQVFLCPMAGMAVGTLCGDALLHLMPHAIFSQHTDHQNA) the chain is Cytoplasmic. A helical membrane pass occupies residues 315–335 (VFKGLSVLGGLYLLFIFESLL). The Extracellular segment spans residues 336–408 (GLKQHFKNLK…DGIHNLTDGL (73 aa)). The span at 363–374 (TSSANQNESSGH) shows a compositional bias: polar residues. The segment at 363–383 (TSSANQNESSGHGHSHGQAEP) is disordered. The helical transmembrane segment at 409 to 429 (AIGVAFSQSLTGGFSTAIAVF) threads the bilayer. Topologically, residues 430 to 452 (CHELPHELGDLAVLLSAGWPVRR) are cytoplasmic. Residues 453 to 473 (LLVFSGLSALLGFVGVLAGSA) traverse the membrane as a helical segment. The Extracellular segment spans residues 474–482 (LGNHWASHS). A helical membrane pass occupies residues 483–503 (PWILTLTAGVFLYVALADMMP). Over 504–518 (EMLHGACGSVSPLKR) the chain is Cytoplasmic. Residues 519 to 539 (FLLQALGLLTGGAIMLCIALF) form a helical membrane-spanning segment. Residues 540–555 (EDHIAVSLGENSLGEN) are Extracellular-facing.

It belongs to the ZIP transporter (TC 2.A.5) family.

Its subcellular location is the basolateral cell membrane. The enzyme catalyses Zn(2+)(in) = Zn(2+)(out). Functionally, uniporter that transports zinc(2+) into polarized cells of enterocytes, pancreatic acinar and endoderm cells across the basolateral membrane and participates, notably, in zinc excretion from the intestine by the uptake of zinc from the blood into the intestine. The transport mechanism is temperature- and concentration-dependent and saturable. Mediates zinc homeostasis that is essential for venous angiogenesis. This chain is Zinc transporter ZIP5 (slc39a5), found in Danio rerio (Zebrafish).